We begin with the raw amino-acid sequence, 533 residues long: Na(+)/H(+) antiporter NhaB (533 aa).

The next 11 membrane-spanning stretches (helical) occupy residues 10-30 (IGNF…SFLI), 67-87 (PGGL…SQVL), 98-118 (LLLV…LFVF), 131-165 (VSLL…FYSI), 209-229 (LLMH…VGEP), 247-267 (IRMS…CFIV), 310-330 (AFVG…VGLI), 355-375 (EEAL…AVII), 396-416 (LVIF…VFVG), 454-474 (ATPN…APLI), and 481-501 (MVWM…MAIQ).

The protein belongs to the NhaB Na(+)/H(+) (TC 2.A.34) antiporter family.

The protein resides in the cell inner membrane. It carries out the reaction 2 Na(+)(in) + 3 H(+)(out) = 2 Na(+)(out) + 3 H(+)(in). Functionally, na(+)/H(+) antiporter that extrudes sodium in exchange for external protons. This is Na(+)/H(+) antiporter NhaB from Shewanella sp. (strain ANA-3).